The following is a 338-amino-acid chain: Formamidase (338 aa).

Positions 15–257 (VVIGLAQLAL…DEIVCCELRP (243 aa)) constitute a CN hydrolase domain. The active-site Proton acceptor is glutamate 61. The active-site Proton donor is the lysine 130. Cysteine 163 serves as the catalytic Nucleophile.

It belongs to the carbon-nitrogen hydrolase superfamily. Aliphatic amidase family.

It carries out the reaction formamide + H2O = formate + NH4(+). Is an aliphatic amidase with a restricted substrate specificity, as it only hydrolyzes formamide. This chain is Formamidase, found in Pseudomonas syringae pv. syringae (strain B728a).